The following is a 441-amino-acid chain: 5-methylthioadenosine/S-adenosylhomocysteine deaminase (441 aa).

H70 and H72 together coordinate Zn(2+). Substrate contacts are provided by E99 and H191. H218 lines the Zn(2+) pocket. 2 residues coordinate substrate: E221 and D306. D306 provides a ligand contact to Zn(2+).

It belongs to the metallo-dependent hydrolases superfamily. MTA/SAH deaminase family. The cofactor is Zn(2+).

It carries out the reaction S-adenosyl-L-homocysteine + H2O + H(+) = S-inosyl-L-homocysteine + NH4(+). The catalysed reaction is S-methyl-5'-thioadenosine + H2O + H(+) = S-methyl-5'-thioinosine + NH4(+). In terms of biological role, catalyzes the deamination of 5-methylthioadenosine and S-adenosyl-L-homocysteine into 5-methylthioinosine and S-inosyl-L-homocysteine, respectively. Is also able to deaminate adenosine. This Lawsonia intracellularis (strain PHE/MN1-00) protein is 5-methylthioadenosine/S-adenosylhomocysteine deaminase.